Here is a 582-residue protein sequence, read N- to C-terminus: DNA mismatch repair protein MutL (582 aa).

Belongs to the DNA mismatch repair MutL/HexB family.

Functionally, this protein is involved in the repair of mismatches in DNA. It is required for dam-dependent methyl-directed DNA mismatch repair. May act as a 'molecular matchmaker', a protein that promotes the formation of a stable complex between two or more DNA-binding proteins in an ATP-dependent manner without itself being part of a final effector complex. In Buchnera aphidicola subsp. Schizaphis graminum (strain Sg), this protein is DNA mismatch repair protein MutL.